The chain runs to 167 residues: G/U mismatch-specific DNA glycosylase (167 aa).

It belongs to the uracil-DNA glycosylase (UDG) superfamily. TDG/mug family. In terms of assembly, binds DNA as a monomer.

Its subcellular location is the cytoplasm. It carries out the reaction Specifically hydrolyzes mismatched double-stranded DNA and polynucleotides, releasing free uracil.. Excises ethenocytosine and uracil, which can arise by alkylation or deamination of cytosine, respectively, from the corresponding mispairs with guanine in ds-DNA. It is capable of hydrolyzing the carbon-nitrogen bond between the sugar-phosphate backbone of the DNA and the mispaired base. The complementary strand guanine functions in substrate recognition. Required for DNA damage lesion repair in stationary-phase cells. This chain is G/U mismatch-specific DNA glycosylase, found in Pectobacterium atrosepticum (strain SCRI 1043 / ATCC BAA-672) (Erwinia carotovora subsp. atroseptica).